A 213-amino-acid polypeptide reads, in one-letter code: Orotate phosphoribosyltransferase (213 aa).

Lys-26 is a 5-phospho-alpha-D-ribose 1-diphosphate binding site. Residue 34–35 (FF) coordinates orotate. 5-phospho-alpha-D-ribose 1-diphosphate contacts are provided by residues 72–73 (YK), Arg-99, Lys-100, Lys-103, His-105, and 124–132 (DDVITAGTA). 2 residues coordinate orotate: Thr-128 and Arg-156.

The protein belongs to the purine/pyrimidine phosphoribosyltransferase family. PyrE subfamily. In terms of assembly, homodimer. Mg(2+) serves as cofactor.

The catalysed reaction is orotidine 5'-phosphate + diphosphate = orotate + 5-phospho-alpha-D-ribose 1-diphosphate. Its pathway is pyrimidine metabolism; UMP biosynthesis via de novo pathway; UMP from orotate: step 1/2. Its function is as follows. Catalyzes the transfer of a ribosyl phosphate group from 5-phosphoribose 1-diphosphate to orotate, leading to the formation of orotidine monophosphate (OMP). The polypeptide is Orotate phosphoribosyltransferase (Haemophilus ducreyi (strain 35000HP / ATCC 700724)).